Consider the following 743-residue polypeptide: Glycerol-3-phosphate O-acyltransferase 2 (743 aa).

Residues 1-34 (MSAPAADHNAAKPIPHVPQASRRYKNSYNGFVYN) lie on the Lumenal side of the membrane. A helical transmembrane segment spans residues 35-55 (IHTWLYDVSVFLFNILFTIFF). The Cytoplasmic portion of the chain corresponds to 56–442 (REIKVRGAYN…TKLEALRCFV (387 aa)). The chain crosses the membrane as a helical span at residues 443 to 457 (TLIVRLIKFSVFAIL). Ser-458 is a topological domain (lumenal). A helical membrane pass occupies residues 459–473 (LPGSILFTPIFIICR). The Cytoplasmic portion of the chain corresponds to 474-501 (VYSEKKAKEGLKKSLVKIKGTDLLATWK). Residues 502 to 522 (LIVALILAPILYVTYSILLII) traverse the membrane as a helical segment. Residues 523 to 531 (LARKQHYCR) lie on the Lumenal side of the membrane. Residues 532–552 (IWVPSNNAFIQFVYFYALLVF) traverse the membrane as a helical segment. Over 553-743 (TTYSSLKTGE…RQKREHEKKE (191 aa)) the chain is Cytoplasmic. Phosphoserine occurs at positions 632, 637, 647, 651, 654, 657, 664, 668, and 671. Thr-673 bears the Phosphothreonine mark. The segment at 682-743 (KQGQWKSEGE…RQKREHEKKE (62 aa)) is disordered. The residue at position 688 (Ser-688) is a Phosphoserine. Over residues 691-700 (ETSEDEDEFD) the composition is skewed to acidic residues. Thr-692 bears the Phosphothreonine mark. Residue Ser-693 is modified to Phosphoserine.

The protein belongs to the GPAT/DAPAT family. Post-translationally, phosphorylated at a conserved motif involving Ser-664, Ser-668 and Ser-671. This phosphorylation plays a critical role for efficient TAG mobilization. Phosphorylation deficiency at this motif increases the enzyme activity and consequently induces de novo formation of phosphatidic acid.

The protein localises to the lipid droplet. Its subcellular location is the endoplasmic reticulum membrane. The enzyme catalyses sn-glycerol 3-phosphate + an acyl-CoA = a 1-acyl-sn-glycero-3-phosphate + CoA. It carries out the reaction dihydroxyacetone phosphate + an acyl-CoA = a 1-acylglycerone 3-phosphate + CoA. The catalysed reaction is sn-glycerol 3-phosphate + hexadecanoyl-CoA = 1-hexadecanoyl-sn-glycero-3-phosphate + CoA. It catalyses the reaction (9Z)-hexadecenoyl-CoA + sn-glycerol 3-phosphate = 1-(9Z-hexadecenoyl)-sn-glycero-3-phosphate + CoA. The enzyme catalyses sn-glycerol 3-phosphate + octadecanoyl-CoA = 1-octadecanoyl-sn-glycero-3-phosphate + CoA. It carries out the reaction sn-glycerol 3-phosphate + (9Z)-octadecenoyl-CoA = 1-(9Z-octadecenoyl)-sn-glycero-3-phosphate + CoA. Its pathway is phospholipid metabolism; CDP-diacylglycerol biosynthesis; CDP-diacylglycerol from sn-glycerol 3-phosphate: step 1/3. In terms of biological role, dual substrate-specific glycerol-3-phosphate/dihydroxyacetone phosphate sn-1 acyltransferase, catalyzing the first and committed reaction in the de novo synthesis of glycerophospholipids and triacylglycerols (TAGs). Can use both Gly-3-P and dihydroxyacetone phosphate with similar efficiencies and has a broad fatty acyl-CoA specificity profile. Transfers a fatty acid from fatty acyl-CoA to the sn-1 position of glycerol-3-phosphate to produce lysophosphatidic acid (LysoPA). These lipids not only are precursors of glycerolipids, but also are dynamic components of signal transduction systems that control cell physiology. This chain is Glycerol-3-phosphate O-acyltransferase 2 (GPT2), found in Saccharomyces cerevisiae (strain ATCC 204508 / S288c) (Baker's yeast).